The chain runs to 352 residues: B1 bradykinin receptor (352 aa).

Residues 1–41 (MASWPPLQLQSSNQSQLFPQNATACDNAPEAWDLLHRVLPT) lie on the Extracellular side of the membrane. N-linked (GlcNAc...) asparagine glycans are attached at residues Asn13 and Asn21. Residues 42 to 62 (FIISICSFGLLGNLFVLLVFL) form a helical membrane-spanning segment. The Cytoplasmic portion of the chain corresponds to 63 to 72 (LPRRRLNVAE). A helical transmembrane segment spans residues 73–93 (IYLANLAASDLVFVLGLPFWA). The Extracellular segment spans residues 94–110 (ENIWNQFNWPFGALLCR). A disulfide bond links Cys109 and Cys188. Residues 111-131 (VINGIIKANLFISIFLVVAIS) traverse the membrane as a helical segment. At 132–153 (QDRYCVLVHPMASRRRQRRRQA) the chain is on the cytoplasmic side. The chain crosses the membrane as a helical span at residues 154–174 (RVTCVLIWVVGGLLSIPTFLL). Over 175–206 (RSIQAVPDLNITACILLLPHEAWHFARIVELN) the chain is Extracellular. Asn184 is a glycosylation site (N-linked (GlcNAc...) asparagine). The chain crosses the membrane as a helical span at residues 207-227 (ILAFLLPLAAIIFFNYHILAS). Residues 228–250 (LRGREEVSRTRCGGSKDSKTTAL) are Cytoplasmic-facing. The helical transmembrane segment at 251–271 (ILTLVVAFLVCWAPYHFFAFL) threads the bilayer. Residues 272-294 (EFLFQVQAVRGCFWEDFIDLGLQ) are Extracellular-facing. A helical membrane pass occupies residues 295–315 (LANFLAFTNSSLNPVIYVFAG). Residues 316–352 (RLFRTKVWELYKQCTPKSLAPISSSHRKEIFQLFWRN) lie on the Cytoplasmic side of the membrane. Cys329 carries the S-palmitoyl cysteine lipid modification.

This sequence belongs to the G-protein coupled receptor 1 family. Bradykinin receptor subfamily. BDKRB1 sub-subfamily.

The protein localises to the cell membrane. In terms of biological role, this is a receptor for bradykinin. Could be a factor in chronic pain and inflammation. The sequence is that of B1 bradykinin receptor (BDKRB1) from Macaca fascicularis (Crab-eating macaque).